The chain runs to 202 residues: Phospholipase A2 inhibitor gamma subunit A (202 aa).

The signal sequence occupies residues Met1–Cys19. 8 disulfides stabilise this stretch: Cys22-Cys47, Cys25-Cys32, Cys40-Cys68, Cys74-Cys95, Cys96-Cys101, Cys119-Cys144, Cys137-Cys166, and Cys170-Cys192. Asn177 carries N-linked (GlcNAc...) asparagine glycosylation.

It belongs to the CNF-like-inhibitor family. As to quaternary structure, heterodimer of subunit A and subunit B. In terms of processing, N-glycosylated. In terms of tissue distribution, expressed by the liver. Not expressed in esophagus, stomach, pancreas, spleen, gall bladder, small intestine, rectum, kidney, trachea, lung, testis and body fat.

The protein resides in the secreted. Inhibits the enzymatic activity of all phospholipase A2 (PA2) groups. The sequence is that of Phospholipase A2 inhibitor gamma subunit A from Elaphe quadrivirgata (Japanese four-lined ratsnake).